The primary structure comprises 287 residues: Cysteine-rich repeat secretory protein 59 (287 aa).

The N-terminal stretch at 1–26 (METTKKLSPIFCFSSLLCLFFTMNQA) is a signal peptide. 2 Gnk2-homologous domains span residues 32–134 (HMDT…DKFF) and 140–250 (KKPN…ITTS). N-linked (GlcNAc...) asparagine glycosylation is found at N43, N47, N63, N72, N93, N103, N111, and N212.

It belongs to the cysteine-rich repeat secretory protein family.

It is found in the secreted. This chain is Cysteine-rich repeat secretory protein 59 (CRRSP59), found in Arabidopsis thaliana (Mouse-ear cress).